We begin with the raw amino-acid sequence, 294 residues long: Formamidopyrimidine-DNA glycosylase (294 aa).

Residue Pro2 is the Schiff-base intermediate with DNA of the active site. Glu3 serves as the catalytic Proton donor. Catalysis depends on Lys58, which acts as the Proton donor; for beta-elimination activity. Residues His105, Arg124, and Lys167 each coordinate DNA. Residues 258 to 294 form an FPG-type zinc finger; that stretch reads QVYDREGEPCRTRGCKGTVKRFTQNGRSTFWCPSCQK. Residue Arg284 is the Proton donor; for delta-elimination activity of the active site.

Belongs to the FPG family. In terms of assembly, monomer. Requires Zn(2+) as cofactor.

The enzyme catalyses Hydrolysis of DNA containing ring-opened 7-methylguanine residues, releasing 2,6-diamino-4-hydroxy-5-(N-methyl)formamidopyrimidine.. The catalysed reaction is 2'-deoxyribonucleotide-(2'-deoxyribose 5'-phosphate)-2'-deoxyribonucleotide-DNA = a 3'-end 2'-deoxyribonucleotide-(2,3-dehydro-2,3-deoxyribose 5'-phosphate)-DNA + a 5'-end 5'-phospho-2'-deoxyribonucleoside-DNA + H(+). Its function is as follows. Involved in base excision repair of DNA damaged by oxidation or by mutagenic agents. Acts as a DNA glycosylase that recognizes and removes damaged bases. Has a preference for oxidized purines, such as 7,8-dihydro-8-oxoguanine (8-oxoG). Has AP (apurinic/apyrimidinic) lyase activity and introduces nicks in the DNA strand. Cleaves the DNA backbone by beta-delta elimination to generate a single-strand break at the site of the removed base with both 3'- and 5'-phosphates. This chain is Formamidopyrimidine-DNA glycosylase, found in Afipia carboxidovorans (strain ATCC 49405 / DSM 1227 / KCTC 32145 / OM5) (Oligotropha carboxidovorans).